The following is a 190-amino-acid chain: Putative manganese efflux pump MntP (190 aa).

Helical transmembrane passes span 6-26 (IWLL…TSGI), 36-56 (FFIM…IGWF), 61-81 (FSHL…AFWG), 108-128 (LAIA…FVGI), 138-158 (IVII…IGVF), and 169-189 (LWGG…HLFL).

It belongs to the MntP (TC 9.B.29) family.

The protein resides in the cell inner membrane. In terms of biological role, probably functions as a manganese efflux pump. The polypeptide is Putative manganese efflux pump MntP (Phocaeicola vulgatus (strain ATCC 8482 / DSM 1447 / JCM 5826 / CCUG 4940 / NBRC 14291 / NCTC 11154) (Bacteroides vulgatus)).